Reading from the N-terminus, the 431-residue chain is Histidine--tRNA ligase (431 aa).

Belongs to the class-II aminoacyl-tRNA synthetase family. As to quaternary structure, homodimer.

The protein localises to the cytoplasm. It catalyses the reaction tRNA(His) + L-histidine + ATP = L-histidyl-tRNA(His) + AMP + diphosphate + H(+). The sequence is that of Histidine--tRNA ligase from Neisseria meningitidis serogroup B (strain ATCC BAA-335 / MC58).